The following is a 338-amino-acid chain: GTPase Obg (338 aa).

The Obg domain occupies 1-159 (MKFVDSASVF…FTLDLELKLM (159 aa)). A disordered region spans residues 123-145 (GGRGNQHFATSTHQAPRHAEPGQ). Positions 160–323 (ADVGLVGFPN…LKDALWRIIV (164 aa)) constitute an OBG-type G domain. Residues 166-173 (GFPNAGKS), 191-195 (FTTLV), 213-216 (DIPG), 280-283 (TKMD), and 304-306 (SAV) each bind GTP. Residues S173 and T193 each contribute to the Mg(2+) site.

Belongs to the TRAFAC class OBG-HflX-like GTPase superfamily. OBG GTPase family. Monomer. Mg(2+) is required as a cofactor.

The protein localises to the cytoplasm. In terms of biological role, an essential GTPase which binds GTP, GDP and possibly (p)ppGpp with moderate affinity, with high nucleotide exchange rates and a fairly low GTP hydrolysis rate. Plays a role in control of the cell cycle, stress response, ribosome biogenesis and in those bacteria that undergo differentiation, in morphogenesis control. This is GTPase Obg from Chlorobium chlorochromatii (strain CaD3).